We begin with the raw amino-acid sequence, 252 residues long: 2,5-diamino-6-ribosylamino-4(3H)-pyrimidinone 5'-phosphate reductase (252 aa).

NADP(+) is bound by residues Thr-80, Asp-84, Val-166, and 189 to 193 (GGIVI).

Belongs to the HTP reductase family. Homodimer.

It catalyses the reaction 2,5-diamino-6-(1-D-ribitylamino)pyrimidin-4(3H)-one 5'-phosphate + NADP(+) = 2,5-diamino-6-(1-D-ribosylamino)pyrimidin-4(3H)-one 5'-phosphate + NADPH + H(+). The enzyme catalyses 2,5-diamino-6-(1-D-ribitylamino)pyrimidin-4(3H)-one 5'-phosphate + NAD(+) = 2,5-diamino-6-(1-D-ribosylamino)pyrimidin-4(3H)-one 5'-phosphate + NADH + H(+). The protein operates within cofactor biosynthesis; riboflavin biosynthesis. In terms of biological role, catalyzes an early step in riboflavin biosynthesis, the NADPH-dependent reduction of the ribose side chain of 2,5-diamino-6-ribosylamino-4(3H)-pyrimidinone 5'-phosphate, yielding 2,5-diamino-6-ribitylamino-4(3H)-pyrimidinone 5'-phosphate. The chain is 2,5-diamino-6-ribosylamino-4(3H)-pyrimidinone 5'-phosphate reductase (RIB7) from Kluyveromyces lactis (strain ATCC 8585 / CBS 2359 / DSM 70799 / NBRC 1267 / NRRL Y-1140 / WM37) (Yeast).